The sequence spans 67 residues: ATP synthase F(0) complex subunit 8 (67 aa).

Residues 8-24 form a helical membrane-spanning segment; sequence TWLIMISSMILTLFITF. N6-acetyllysine; alternate is present on K54. At K54 the chain carries N6-succinyllysine; alternate. Position 57 is an N6-acetyllysine (K57).

Belongs to the ATPase protein 8 family. In terms of assembly, component of the ATP synthase complex composed at least of ATP5F1A/subunit alpha, ATP5F1B/subunit beta, ATP5MC1/subunit c (homooctomer), MT-ATP6/subunit a, MT-ATP8/subunit 8, ATP5ME/subunit e, ATP5MF/subunit f, ATP5MG/subunit g, ATP5MK/subunit k, ATP5MJ/subunit j, ATP5F1C/subunit gamma, ATP5F1D/subunit delta, ATP5F1E/subunit epsilon, ATP5PF/subunit F6, ATP5PB/subunit b, ATP5PD/subunit d, ATP5PO/subunit OSCP. ATP synthase complex consists of a soluble F(1) head domain (subunits alpha(3) and beta(3)) - the catalytic core - and a membrane F(0) domain - the membrane proton channel (subunits c, a, 8, e, f, g, k and j). These two domains are linked by a central stalk (subunits gamma, delta, and epsilon) rotating inside the F1 region and a stationary peripheral stalk (subunits F6, b, d, and OSCP). Interacts with PRICKLE3.

It localises to the mitochondrion membrane. Subunit 8, of the mitochondrial membrane ATP synthase complex (F(1)F(0) ATP synthase or Complex V) that produces ATP from ADP in the presence of a proton gradient across the membrane which is generated by electron transport complexes of the respiratory chain. ATP synthase complex consist of a soluble F(1) head domain - the catalytic core - and a membrane F(1) domain - the membrane proton channel. These two domains are linked by a central stalk rotating inside the F(1) region and a stationary peripheral stalk. During catalysis, ATP synthesis in the catalytic domain of F(1) is coupled via a rotary mechanism of the central stalk subunits to proton translocation. In vivo, can only synthesize ATP although its ATP hydrolase activity can be activated artificially in vitro. Part of the complex F(0) domain. The polypeptide is ATP synthase F(0) complex subunit 8 (Halichoerus grypus (Gray seal)).